The chain runs to 421 residues: MKVLPAKKVEGVLSVPPDKSITHRALILSALAETESTLYNLLRCLDTERTHDILEKLGTRFEGDWEKMKVFPKPFAEPIEPLFCGNSGTTTRLMSGVLASYEMFTVLYGDSSLSRRPMRRVIEPLEMMGARFMARQNNYLPMAIKGNHLSGISYKTPVASAQVKSAVLLAGLRASGRTIVIEPAKSRDHTERMLKNLGVPVEVEGTRVVLEPATFRGFTMKVPGDISSAAFFVVLGAIHPNARITVTDVGLNPTRTGLLEVMKLMGANLEWEITEENLEPIGTVRVETSPNLKGVVVPEHLVPLMIDELPLVALLGVFAEGETVVRNAEELRKKESDRIRVLVENFKRLGVEIEEFKDGFKIVGKQSIKGGSVDPEGDHRMAMLFSIAGLVSEEGVDVKDHECVAVSFPNFYELLERVVIS.

3-phosphoshikimate-binding residues include lysine 19, serine 20, and arginine 24. Position 19 (lysine 19) interacts with phosphoenolpyruvate. Phosphoenolpyruvate is bound by residues glycine 88 and arginine 116. The 3-phosphoshikimate site is built by serine 160, glutamine 162, aspartate 307, and lysine 334. Glutamine 162 contributes to the phosphoenolpyruvate binding site. The Proton acceptor role is filled by aspartate 307. Phosphoenolpyruvate-binding residues include arginine 338 and arginine 380.

The protein belongs to the EPSP synthase family. Monomer.

Its subcellular location is the cytoplasm. It catalyses the reaction 3-phosphoshikimate + phosphoenolpyruvate = 5-O-(1-carboxyvinyl)-3-phosphoshikimate + phosphate. Its pathway is metabolic intermediate biosynthesis; chorismate biosynthesis; chorismate from D-erythrose 4-phosphate and phosphoenolpyruvate: step 6/7. Functionally, catalyzes the transfer of the enolpyruvyl moiety of phosphoenolpyruvate (PEP) to the 5-hydroxyl of shikimate-3-phosphate (S3P) to produce enolpyruvyl shikimate-3-phosphate and inorganic phosphate. The chain is 3-phosphoshikimate 1-carboxyvinyltransferase from Thermotoga sp. (strain RQ2).